Here is a 296-residue protein sequence, read N- to C-terminus: CCAAT/enhancer-binding protein beta (296 aa).

The required for Lys-133 sumoylation stretch occupies residues 1 to 22 (MHRLLAWDAACLPPPPAAFRPM). Arginine 3 is subject to Asymmetric dimethylarginine; by CARM1. The tract at residues 22-104 (MEVANFYYEP…YGAKPSKKPA (83 aa)) is required for MYC transcriptional repression. Lysine 39 is subject to N6-acetyllysine; alternate. Residue lysine 39 is modified to N6-methylated lysine; alternate. An N6-acetyllysine; by KAT2A and KAT2B mark is found at lysine 98 and lysine 101. The residue at position 102 (lysine 102) is an N6-acetyllysine; by KAT2A and KAT2B; alternate. Glycyl lysine isopeptide (Lys-Gly) (interchain with G-Cter in SUMO2); alternate cross-links involve residues lysine 102 and lysine 133. Lysine 133 participates in a covalent cross-link: Glycyl lysine isopeptide (Lys-Gly) (interchain with G-Cter in SUMO); alternate. A Glycyl lysine isopeptide (Lys-Gly) (interchain with G-Cter in SUMO2) cross-link involves residue lysine 144. Residues 171–199 (SGSSGSLSTSSSSSPPGTPSPADAKAAPA) form a disordered region. At threonine 179 the chain carries Phosphothreonine; by GSK3-beta. Residues serine 180 and serine 181 are each glycosylated (O-linked (GlcNAc) serine). Phosphoserine; by GSK3-beta is present on serine 184. Threonine 188 carries the phosphothreonine; by RPS6KA1, CDK2 and MAPK modification. Glycyl lysine isopeptide (Lys-Gly) (interchain with G-Cter in SUMO2) cross-links involve residues lysine 211 and lysine 213. Threonine 217 bears the Phosphothreonine; by RPS6KA1 and PKC/PRKCA mark. Positions 222–285 (SDEYKMRRER…STLRNLFKQL (64 aa)) constitute a bZIP domain. Residues 226 to 246 (KMRRERNNIAVRKSRDKAKMR) are basic motif. Serine 239 carries the phosphoserine; by PKC/PRKCA modification. Positions 248-255 (LETQHKVL) are leucine-zipper. Serine 276 is modified (phosphoserine; by CaMK2). Residue lysine 283 forms a Glycyl lysine isopeptide (Lys-Gly) (interchain with G-Cter in SUMO2) linkage.

It belongs to the bZIP family. C/EBP subfamily. Binds DNA as a homodimer and as a heterodimer. Interacts with ATF4. Binds DNA as a heterodimer with ATF4. Interacts with MYB; within the complex, MYB and CEBPB bind to different promoter regions. Can form stable heterodimers with CEBPA, CEBPD and CEBPE. Interacts with SIX1. Isoform 2 and isoform 3 also form heterodimers. Interacts with TRIM28 and PTGES2. Interacts with PRDM16. Interacts with CCDC85B. Forms a complex with THOC5. Interacts with ZNF638; this interaction increases transcriptional activation. Interacts with CIDEA and CIDEC. Interaction with CIDEA increases transcriptional activation of a subset of CEBPB downstream target genes, including ID2, IGF1, PRLR, SOCS1, SOCS3, XDH. Interaction with CIDEC increases transcriptional activation of SOCS1, SOCS3, TGFB1, TGFBR1, ID2 and XDH. Interacts with DDIT3/CHOP. Interacts with EP300; recruits EP300 to chromatin. Interacts with RORA; the interaction disrupts interaction with EP300. Interacts (not methylated) with MED23, MED26, SMARCA2, SMARCB1 and SMARCC1. Interacts with KAT2A and KAT2B. Interacts with ATF5; EP300 is required for ATF5 and CEBPB interaction and DNA binding. Interacts with NFE2L1; the heterodimer represses expression of DSPP during odontoblast differentiation. Sumoylated by polymeric chains of SUMO2 or SUMO3. Sumoylation at Lys-133 is required for inhibition of T-cells proliferation. In adipocytes, sumoylation at Lys-133 by PIAS1 leads to ubiquitination and subsequent proteasomal degradation. Desumoylated by SENP2, which abolishes ubiquitination and stabilizes protein levels. In terms of processing, ubiquitinated, leading to proteasomal degradation. Post-translationally, phosphorylated at Thr-188 by MAPK and CDK2, serves to prime phosphorylation at Thr-179 and Ser-184 by GSK3B and acquire DNA-binding as well as transactivation activities, required to induce adipogenesis. MAPK and CDK2 act sequentially to maintain Thr-188 in the primed phosphorylated state during mitotical cloning expansion and thereby progression of terminal differentiation. Phosphorylation at Thr-217 enhances transactivation activity. Phosphorylation at Ser-276 in response to calcium increases transactivation activity. Phosphorylated at Thr-188 by RPS6KA1. O-glycosylated, glycosylation at Ser-180 and Ser-181 prevents phosphorylation on Thr-188, Ser-184 and Thr-179 and DNA binding activity which delays the adipocyte differentiation program. In terms of processing, acetylated. Acetylation at Lys-39 is an important and dynamic regulatory event that contributes to its ability to transactivate target genes, including those associated with adipogenesis and adipocyte function. Deacetylation by HDAC1 represses its transactivation activity. Acetylated by KAT2A and KAT2B within a cluster of lysine residues between amino acids 98-102, this acetylation is strongly induced by glucocorticoid treatment and enhances transactivation activity. Post-translationally, methylated. Methylation at Arg-3 by CARM1 and at Lys-39 by EHMT2, inhibits transactivation activity. Methylation is probably inhibited by phosphorylation at Thr-188. As to expression, abundantly expressed in myoblasts. Enriched in brown adipose tissue (BAT) versus white adipose tissue (WAT). Expressed in hepatocytes (at protein level). Expressed in T lymphocytes. The expression in granulosa cells of antral follicles is induced by luteinizing hormone. Expressed in chondrocytes and osteoblasts (at protein level).

Its subcellular location is the nucleus. It localises to the cytoplasm. In terms of biological role, important transcription factor regulating the expression of genes involved in immune and inflammatory responses. Also plays a significant role in adipogenesis, as well as in the gluconeogenic pathway, liver regeneration, and hematopoiesis. The consensus recognition site is 5'-T[TG]NNGNAA[TG]-3'. Its functional capacity is governed by protein interactions and post-translational protein modifications. During early embryogenesis, plays essential and redundant roles with CEBPA. Has a promitotic effect on many cell types such as hepatocytes and adipocytes but has an antiproliferative effect on T-cells by repressing MYC expression, facilitating differentiation along the T-helper 2 lineage. Binds to regulatory regions of several acute-phase and cytokines genes and plays a role in the regulation of acute-phase reaction and inflammation. Also plays a role in intracellular bacteria killing. During adipogenesis, is rapidly expressed and, after activation by phosphorylation, induces CEBPA and PPARG, which turn on the series of adipocyte genes that give rise to the adipocyte phenotype. The delayed transactivation of the CEBPA and PPARG genes by CEBPB appears necessary to allow mitotic clonal expansion and thereby progression of terminal differentiation. Essential for female reproduction because of a critical role in ovarian follicle development. Restricts osteoclastogenesis. Together with NFE2L1; represses expression of DSPP during odontoblast differentiation. Its function is as follows. Essential for gene expression induction in activated macrophages. Plays a major role in immune responses such as CD4(+) T-cell response, granuloma formation and endotoxin shock. Not essential for intracellular bacteria killing. Functionally, acts as a dominant negative through heterodimerization with isoform 2. Promotes osteoblast differentiation and osteoclastogenesis. This is CCAAT/enhancer-binding protein beta from Mus musculus (Mouse).